Reading from the N-terminus, the 491-residue chain is Synaptotagmin-9 (491 aa).

The Vesicular segment spans residues M1–V52. A cysteine motif region spans residues C9–Q31. A helical transmembrane segment spans residues S53–V73. Over S74–R491 the chain is Cytoplasmic. Residues S91 to T104 are compositionally biased toward polar residues. The interval S91 to N147 is disordered. Residues E105 to L116 show a composition bias toward acidic residues. Positions M127 to G144 are enriched in polar residues. Residue S177 is modified to Phosphoserine. C2 domains lie at A220–K341 and D352–H485. 11 residues coordinate Ca(2+): D251, D257, D309, F310, D311, S314, D317, D383, D389, D443, and D445.

This sequence belongs to the synaptotagmin family. In terms of assembly, homodimer; disulfide-linked via the cysteine motif. Can also form heterodimers with SYT3, SYT6, SYT7 and SYT10. Interacts with DNAJC5 and SNAP25, but not with HSC70. The interaction with DNAJC5 is stimulated tenfold in presence of calcium while the interaction with SNAP25 is inhibited. Requires Ca(2+) as cofactor.

The protein resides in the cytoplasmic vesicle. Its subcellular location is the secretory vesicle. The protein localises to the synaptic vesicle membrane. Functionally, may be involved in Ca(2+)-dependent exocytosis of secretory vesicles through Ca(2+) and phospholipid binding to the C2 domain or may serve as Ca(2+) sensors in the process of vesicular trafficking and exocytosis. The chain is Synaptotagmin-9 (Syt9) from Mus musculus (Mouse).